The following is a 333-amino-acid chain: Glycerol-3-phosphate dehydrogenase [NAD(P)+] (333 aa).

4 residues coordinate NADPH: S13, W14, R34, and K108. Positions 108, 137, and 139 each coordinate sn-glycerol 3-phosphate. A141 contributes to the NADPH binding site. The sn-glycerol 3-phosphate site is built by K192, D245, S255, R256, and N257. The Proton acceptor role is filled by K192. Residue R256 coordinates NADPH. An NADPH-binding site is contributed by E282.

This sequence belongs to the NAD-dependent glycerol-3-phosphate dehydrogenase family.

It localises to the cytoplasm. It carries out the reaction sn-glycerol 3-phosphate + NAD(+) = dihydroxyacetone phosphate + NADH + H(+). It catalyses the reaction sn-glycerol 3-phosphate + NADP(+) = dihydroxyacetone phosphate + NADPH + H(+). Its pathway is membrane lipid metabolism; glycerophospholipid metabolism. Its function is as follows. Catalyzes the reduction of the glycolytic intermediate dihydroxyacetone phosphate (DHAP) to sn-glycerol 3-phosphate (G3P), the key precursor for phospholipid synthesis. The sequence is that of Glycerol-3-phosphate dehydrogenase [NAD(P)+] from Thioalkalivibrio sulfidiphilus (strain HL-EbGR7).